A 48-amino-acid polypeptide reads, in one-letter code: Large ribosomal subunit protein bL33B (48 aa).

The protein belongs to the bacterial ribosomal protein bL33 family.

This is Large ribosomal subunit protein bL33B (rpmG2) from Mycoplasma pneumoniae (strain ATCC 29342 / M129 / Subtype 1) (Mycoplasmoides pneumoniae).